The chain runs to 135 residues: Fatty acid-binding protein homolog 6 (135 aa).

Residues R110 and 130-132 (REY) contribute to the a fatty acid site.

This sequence belongs to the calycin superfamily. Fatty-acid binding protein (FABP) family.

The polypeptide is Fatty acid-binding protein homolog 6 (lbp-6) (Caenorhabditis elegans).